A 196-amino-acid chain; its full sequence is MIPVVIEQTSRGERSYDIYSRLLKDRIIMLTGQVEDNMANSIIAQLLFLDAQDNTKDIYLYVNTPGGSVSAGLAIVDTMNFIKSDVQTIVMGMAASMGTIIASSGAKGKRFMLPNAEYMIHQPMGGTGGGTQQSDMAIAAEHLLKTRHTLEKILADNSGQSIEKVHDDAERDRWMSAQETLDYGFIDAIMENNNLQ.

Serine 96 (nucleophile) is an active-site residue. Residue histidine 121 is part of the active site.

It belongs to the peptidase S14 family. In terms of assembly, fourteen ClpP subunits assemble into 2 heptameric rings which stack back to back to give a disk-like structure with a central cavity, resembling the structure of eukaryotic proteasomes.

The protein localises to the cytoplasm. It carries out the reaction Hydrolysis of proteins to small peptides in the presence of ATP and magnesium. alpha-casein is the usual test substrate. In the absence of ATP, only oligopeptides shorter than five residues are hydrolyzed (such as succinyl-Leu-Tyr-|-NHMec, and Leu-Tyr-Leu-|-Tyr-Trp, in which cleavage of the -Tyr-|-Leu- and -Tyr-|-Trp bonds also occurs).. Cleaves peptides in various proteins in a process that requires ATP hydrolysis. Has a chymotrypsin-like activity. Plays a major role in the degradation of misfolded proteins. The chain is ATP-dependent Clp protease proteolytic subunit from Streptococcus agalactiae serotype III (strain NEM316).